Reading from the N-terminus, the 238-residue chain is Putative csd-like protein HI_1343 (238 aa).

An N6-(pyridoxal phosphate)lysine modification is found at Lys-146.

Belongs to the class-V pyridoxal-phosphate-dependent aminotransferase family. Csd subfamily.

This is Putative csd-like protein HI_1343 from Haemophilus influenzae (strain ATCC 51907 / DSM 11121 / KW20 / Rd).